The following is a 183-amino-acid chain: dTDP-4-dehydrorhamnose 3,5-epimerase (183 aa).

Residues R24, E29, 48–50, and R60 each bind substrate; that span reads QDN. The active-site Proton acceptor is the H63. Substrate contacts are provided by K73 and H120. Y133 serves as the catalytic Proton donor. Residues E144 and K169 each contribute to the substrate site.

The protein belongs to the dTDP-4-dehydrorhamnose 3,5-epimerase family. As to quaternary structure, homodimer.

It carries out the reaction dTDP-4-dehydro-6-deoxy-alpha-D-glucose = dTDP-4-dehydro-beta-L-rhamnose. The protein operates within carbohydrate biosynthesis; dTDP-L-rhamnose biosynthesis. It functions in the pathway bacterial outer membrane biogenesis; LPS O-antigen biosynthesis. Functionally, catalyzes the epimerization of the C3' and C5'positions of dTDP-6-deoxy-D-xylo-4-hexulose, forming dTDP-6-deoxy-L-lyxo-4-hexulose. The chain is dTDP-4-dehydrorhamnose 3,5-epimerase from Salmonella typhimurium (strain LT2 / SGSC1412 / ATCC 700720).